The following is a 263-amino-acid chain: MDVMNAFDSQAEDSPTSLGRSLRRRPLARKKLSEMVEEELEQMIRRHEFGEGEQLPSERELMAFFNVGRPSVREALAALKRKGLVQINNGERARVSRPSADTIISELSGMAKDFLTHPGGIAHFEQLRLFFESSLVRYAAEHATDEQIALLTKALEINSQSLDDNALFIRSDVEFHRVLAEIPGNPIFMAIHVALLDWLIAARPSVPDRELHEHNNVSYQQHIVIVDAIRQRDPDKADRALQTHLNSVSATWHALGKKSQKMR.

The disordered stretch occupies residues 1–25; that stretch reads MDVMNAFDSQAEDSPTSLGRSLRRR. In terms of domain architecture, HTH gntR-type spans 30 to 98; that stretch reads KKLSEMVEEE…NGERARVSRP (69 aa). Positions 58-77 form a DNA-binding region, H-T-H motif; the sequence is ERELMAFFNVGRPSVREALA.

It belongs to the NanR family.

In terms of biological role, transcriptional repressor that controls expression of the genes required for the catabolism of sialic acids. This is HTH-type transcriptional repressor NanR from Salmonella choleraesuis (strain SC-B67).